Consider the following 100-residue polypeptide: Glutamyl-tRNA(Gln) amidotransferase subunit C (100 aa).

It belongs to the GatC family. In terms of assembly, heterotrimer of A, B and C subunits.

The catalysed reaction is L-glutamyl-tRNA(Gln) + L-glutamine + ATP + H2O = L-glutaminyl-tRNA(Gln) + L-glutamate + ADP + phosphate + H(+). It catalyses the reaction L-aspartyl-tRNA(Asn) + L-glutamine + ATP + H2O = L-asparaginyl-tRNA(Asn) + L-glutamate + ADP + phosphate + 2 H(+). Functionally, allows the formation of correctly charged Asn-tRNA(Asn) or Gln-tRNA(Gln) through the transamidation of misacylated Asp-tRNA(Asn) or Glu-tRNA(Gln) in organisms which lack either or both of asparaginyl-tRNA or glutaminyl-tRNA synthetases. The reaction takes place in the presence of glutamine and ATP through an activated phospho-Asp-tRNA(Asn) or phospho-Glu-tRNA(Gln). This chain is Glutamyl-tRNA(Gln) amidotransferase subunit C, found in Rickettsia conorii (strain ATCC VR-613 / Malish 7).